A 337-amino-acid chain; its full sequence is Trace amine-associated receptor 5 (337 aa).

Over 1-38 (MRAVLLPGSGEQPTAFCYQVNGSCPRTVHPLAIQVVIY) the chain is Extracellular. An N-linked (GlcNAc...) asparagine glycan is attached at Asn-21. 2 disulfide bridges follow: Cys-24-Cys-188 and Cys-99-Cys-192. The chain crosses the membrane as a helical span at residues 39–59 (LACAVGVLITVLGNLFVVFAV). Residues 60–70 (SYFKVLHTPTN) lie on the Cytoplasmic side of the membrane. Residues 71–91 (FLLLSLALADMLLGLLVLPLS) form a helical membrane-spanning segment. Topologically, residues 92-109 (TVRSVESCWFFGDFLCRL) are extracellular. A helical transmembrane segment spans residues 110 to 130 (HTYLDTLFCLTSIFHLCFISI). Residues 131 to 154 (DRHCAICDPLLYPSKFTVRTALRY) lie on the Cytoplasmic side of the membrane. A helical transmembrane segment spans residues 155–175 (IVAGWGIPAAYTAFFLYTDVV). The interval 176–189 (ERALSQWLEEMPCV) is extracellular Loop 2 (ECL2). The Extracellular segment spans residues 176 to 204 (ERALSQWLEEMPCVGSCQLLFNKFWGWLN). Residues 205 to 225 (FPAFFVPCLIMISLYLKIFVV) traverse the membrane as a helical segment. The Cytoplasmic segment spans residues 226–253 (ATRQAQQIRTLSQSLAGAVKRERKAAKT). The helical transmembrane segment at 254–274 (LGIAVGIYLVCWLPFTVDTLV) threads the bilayer. Residues 275–284 (DSLLNFITPP) lie on the Extracellular side of the membrane. The chain crosses the membrane as a helical span at residues 285-307 (LVFDIFIWFAYFNSACNPIIYVF). Residues 308 to 337 (SYRWFRKALKLLLSREIFSPRTPTVDLYHD) are Cytoplasmic-facing.

It belongs to the G-protein coupled receptor 1 family. In terms of tissue distribution, specifically expressed in neurons of the olfactory epithelium, to discrete glomeruli predominantly localized to a confined bulb region. Present in the dorsal area of the main olfactory epithelium. Also present in the limbic brain areas receiving projection from the olfactory system and involved in the regulation of emotions. Also expressed in some brain regions outside the olfactory epithelium, such as the hippocampus, cerebellum, cortex, raphe nuclei, hypothalamus, and habenula.

It is found in the cell membrane. With respect to regulation, inhibited by 1-[(5,5- diphenyloxolan-2-yl)methyl]-4-(2-methoxyphenyl)piperazine and N-[(2,2-diphenyl-1,3-dioxolan-4-yl)methyl]-2-(2- methoxyphenoxy)ethan-1-amine small molecules. Olfactory receptor specific for trimethylamine, a trace amine enriched in the urine of male mice, playing a role in social behavior. Also activated by N-methylpiperidine. Trimethylamine is present at high concentration in the urine of male mice after puberty and acts as an attractant. Trimethylamine-binding causes a conformation change that triggers signaling via G(s)-class of G alpha proteins (GNAL or GNAS). Also required to provide olfactory input into limbic brain areas to regulate emotional behaviors likely via modulation of the serotonin system. In Mus musculus (Mouse), this protein is Trace amine-associated receptor 5.